Here is a 195-residue protein sequence, read N- to C-terminus: Putative NADH dehydrogenase/NAD(P)H nitroreductase Caul_0018 (195 aa).

This sequence belongs to the nitroreductase family. HadB/RutE subfamily. The cofactor is FMN.

This chain is Putative NADH dehydrogenase/NAD(P)H nitroreductase Caul_0018, found in Caulobacter sp. (strain K31).